The sequence spans 470 residues: UDP-glycosyltransferase 72D1 (470 aa).

Residues Ser-276, 343–345 (APQ), 360–368 (HCGWSSALE), and 382–385 (YAEQ) each bind UDP-alpha-D-glucose.

This sequence belongs to the UDP-glycosyltransferase family.

The protein is UDP-glycosyltransferase 72D1 (UGT72D1) of Arabidopsis thaliana (Mouse-ear cress).